The following is a 49-amino-acid chain: Large ribosomal subunit protein bL33B (49 aa).

This sequence belongs to the bacterial ribosomal protein bL33 family.

This Lactobacillus delbrueckii subsp. bulgaricus (strain ATCC BAA-365 / Lb-18) protein is Large ribosomal subunit protein bL33B.